The sequence spans 210 residues: Large ribosomal subunit protein bL25 (210 aa).

A disordered region spans residues 191-210 (KPAPKAAETDEDGEEAASEE). The span at 199 to 210 (TDEDGEEAASEE) shows a compositional bias: acidic residues.

This sequence belongs to the bacterial ribosomal protein bL25 family. CTC subfamily. As to quaternary structure, part of the 50S ribosomal subunit; part of the 5S rRNA/L5/L18/L25 subcomplex. Contacts the 5S rRNA. Binds to the 5S rRNA independently of L5 and L18.

This is one of the proteins that binds to the 5S RNA in the ribosome where it forms part of the central protuberance. This Alteromonas mediterranea (strain DSM 17117 / CIP 110805 / LMG 28347 / Deep ecotype) protein is Large ribosomal subunit protein bL25.